Reading from the N-terminus, the 307-residue chain is Putative S-adenosyl-L-methionine-dependent methyltransferase MUL_4430 (307 aa).

Residues Asp128 and 157 to 158 (DL) each bind S-adenosyl-L-methionine.

Belongs to the UPF0677 family.

In terms of biological role, exhibits S-adenosyl-L-methionine-dependent methyltransferase activity. This chain is Putative S-adenosyl-L-methionine-dependent methyltransferase MUL_4430, found in Mycobacterium ulcerans (strain Agy99).